Here is a 70-residue protein sequence, read N- to C-terminus: Large ribosomal subunit protein eL38 (70 aa).

The protein belongs to the eukaryotic ribosomal protein eL38 family.

The chain is Large ribosomal subunit protein eL38 (RpL38) from Plutella xylostella (Diamondback moth).